Reading from the N-terminus, the 314-residue chain is MAFVTRQFLRSMSSSSSASAAAKKILIKHVTVIGGGLMGAGIAQVAAATGHTVVLVDQTEDILAKSKKGIEESLKRMAKKKFTENPKAGDEFVEKTLSCLSTSTDAASVVHSTDLVVEAIVENLKLKNELFQRLDKFAAEHTIFASNTSSLQITNIANATTRQDRFAGLHFFNPVPMMKLVEVIKTPMTSQKTFESLVDFCKTLGKHPVSCKDTPGFIVNRLLVPYLIEAVRLHERGDASKEDIDTAMKLGAGYPMGPFELLDYVGLDTTKFILDGWHEMEPENPLFQPSPSMNNLVAQKKLGKKTGEGFYKYK.

The N-terminal 12 residues, 1-12 (MAFVTRQFLRSM), are a transit peptide targeting the mitochondrion. NAD(+)-binding positions include 34–39 (GGGLMG) and Asp-57. Ser-73 contacts CoA. Lys-75 bears the N6-acetyllysine mark. Position 80 (Lys-80) interacts with CoA. Position 80 is an N6-succinyllysine (Lys-80). 2 positions are modified to N6-acetyllysine; alternate: Lys-81 and Lys-87. N6-succinyllysine; alternate occurs at positions 81 and 87. NAD(+) is bound at residue Glu-122. N6-acetyllysine is present on Lys-125. Lys-127 contributes to the NAD(+) binding site. Residue Lys-127 is modified to N6-(2-hydroxyisobutyryl)lysine. Lys-136 is modified (N6-acetyllysine; alternate). Residue Lys-136 is modified to N6-succinyllysine; alternate. 2 residues coordinate NAD(+): Ser-149 and Asn-173. Residue Ser-149 participates in CoA binding. Lys-179 is subject to N6-acetyllysine. Residues Lys-185, Lys-192, and Lys-202 each carry the N6-acetyllysine; alternate modification. N6-succinyllysine; alternate occurs at positions 185, 192, and 202. The residue at position 206 (Lys-206) is an N6-succinyllysine. N6-acetyllysine; alternate is present on residues Lys-212 and Lys-241. Lys-212 and Lys-241 each carry N6-succinyllysine; alternate. Lys-305 serves as a coordination point for NAD(+). Lys-312 carries the N6-acetyllysine; alternate modification. Lys-312 bears the N6-succinyllysine; alternate mark.

It belongs to the 3-hydroxyacyl-CoA dehydrogenase family. In terms of assembly, homodimer. Interacts with GLUD1; this interaction inhibits the activation of glutamate dehydrogenase 1 (GLUD1). In terms of processing, succinylation at Lys-81, adjacent to a coenzyme A binding site. Desuccinylated by SIRT5. Expressed in liver, kidney, brain, and pancreatic islets.

It localises to the mitochondrion matrix. It is found in the nucleus. The protein resides in the cytoplasm. Its subcellular location is the cytosol. The catalysed reaction is a (3S)-3-hydroxyacyl-CoA + NAD(+) = a 3-oxoacyl-CoA + NADH + H(+). It carries out the reaction (3S)-3-hydroxybutanoyl-CoA + NAD(+) = acetoacetyl-CoA + NADH + H(+). The enzyme catalyses (3S)-hydroxydecanoyl-CoA + NAD(+) = 3-oxodecanoyl-CoA + NADH + H(+). It catalyses the reaction (3S)-hydroxyhexadecanoyl-CoA + NAD(+) = 3-oxohexadecanoyl-CoA + NADH + H(+). The protein operates within lipid metabolism; fatty acid beta-oxidation. Its function is as follows. Mitochondrial fatty acid beta-oxidation enzyme that catalyzes the third step of the beta-oxidation cycle for medium and short-chain 3-hydroxy fatty acyl-CoAs (C4 to C10). Plays a role in the control of insulin secretion by inhibiting the activation of glutamate dehydrogenase 1 (GLUD1), an enzyme that has an important role in regulating amino acid-induced insulin secretion. Plays a role in the maintenance of normal spermatogenesis through the reduction of fatty acid accumulation in the testes. Functionally, inhibits cell proliferation. The polypeptide is Hydroxyacyl-coenzyme A dehydrogenase, mitochondrial (Hadh) (Mus musculus (Mouse)).